The chain runs to 109 residues: UPF0122 protein Cbei_1174 (109 aa).

It belongs to the UPF0122 family.

Might take part in the signal recognition particle (SRP) pathway. This is inferred from the conservation of its genetic proximity to ftsY/ffh. May be a regulatory protein. This is UPF0122 protein Cbei_1174 from Clostridium beijerinckii (strain ATCC 51743 / NCIMB 8052) (Clostridium acetobutylicum).